A 464-amino-acid chain; its full sequence is L-2-hydroxyglutarate dehydrogenase, mitochondrial (464 aa).

The N-terminal 52 residues, 1–52 (MWPTLRYVGGVCGLARYCVAGGFLRASGPASGVPGLLCGGGRRSSSTSSFDI), are a transit peptide targeting the mitochondrion. N6-acetyllysine occurs at positions 105 and 174.

This sequence belongs to the L2HGDH family. Requires FAD as cofactor.

It is found in the mitochondrion. The enzyme catalyses (S)-2-hydroxyglutarate + A = 2-oxoglutarate + AH2. The protein is L-2-hydroxyglutarate dehydrogenase, mitochondrial (L2hgdh) of Mus musculus (Mouse).